The following is a 550-amino-acid chain: Chaperonin GroEL (550 aa).

ATP-binding positions include 30-33 (TLGP), K51, 87-91 (DGTTT), G415, and D495.

This sequence belongs to the chaperonin (HSP60) family. As to quaternary structure, forms a cylinder of 14 subunits composed of two heptameric rings stacked back-to-back. Interacts with the co-chaperonin GroES.

The protein localises to the cytoplasm. The enzyme catalyses ATP + H2O + a folded polypeptide = ADP + phosphate + an unfolded polypeptide.. In terms of biological role, together with its co-chaperonin GroES, plays an essential role in assisting protein folding. The GroEL-GroES system forms a nano-cage that allows encapsulation of the non-native substrate proteins and provides a physical environment optimized to promote and accelerate protein folding. In Shewanella woodyi (strain ATCC 51908 / MS32), this protein is Chaperonin GroEL.